A 169-amino-acid polypeptide reads, in one-letter code: uncharacterized protein (169 aa).

The HTH asnC-type domain maps to 18–79; the sequence is LDRADVALLN…IVSPKAVGRP (62 aa). Positions 37-56 form a DNA-binding region, H-T-H motif; the sequence is SEELADKVGLSPTACQRRLK.

This is an uncharacterized protein from Sinorhizobium fredii (strain NBRC 101917 / NGR234).